The primary structure comprises 500 residues: L-arabinose isomerase (500 aa).

Mn(2+) contacts are provided by E306, E333, H350, and H450.

Belongs to the arabinose isomerase family. Homohexamer. Mn(2+) serves as cofactor.

The enzyme catalyses beta-L-arabinopyranose = L-ribulose. It functions in the pathway carbohydrate degradation; L-arabinose degradation via L-ribulose; D-xylulose 5-phosphate from L-arabinose (bacterial route): step 1/3. Functionally, catalyzes the conversion of L-arabinose to L-ribulose. This chain is L-arabinose isomerase, found in Escherichia coli O6:H1 (strain CFT073 / ATCC 700928 / UPEC).